The chain runs to 411 residues: Bifunctional protein GlmU (411 aa).

Residues 1–204 (MDAVILCAGK…ENNIKGIKLN (204 aa)) form a pyrophosphorylase region. Residues 6 to 9 (LCAG), Gln-74, and Gly-79 each bind UTP. N-acetyl-alpha-D-glucosamine 1-phosphate contacts are provided by Thr-80, Gly-132, Glu-144, and Asn-158. Positions 205–224 (GYWNDIGKPWDLLDANTHIL) are linker. The interval 225-411 (KNIKTDIKGK…EEIIIKTKRK (187 aa)) is N-acetyltransferase. His-308 serves as the catalytic Proton acceptor. Positions 384 and 401 each coordinate acetyl-CoA.

The protein in the N-terminal section; belongs to the N-acetylglucosamine-1-phosphate uridyltransferase family. In the C-terminal section; belongs to the transferase hexapeptide repeat family.

The catalysed reaction is N-acetyl-alpha-D-glucosamine 1-phosphate + UTP + H(+) = UDP-N-acetyl-alpha-D-glucosamine + diphosphate. It catalyses the reaction alpha-D-glucosamine 1-phosphate + acetyl-CoA = N-acetyl-alpha-D-glucosamine 1-phosphate + CoA + H(+). It functions in the pathway nucleotide-sugar biosynthesis; UDP-N-acetyl-alpha-D-glucosamine biosynthesis; N-acetyl-alpha-D-glucosamine 1-phosphate from alpha-D-glucosamine 6-phosphate (route II): step 2/2. It participates in nucleotide-sugar biosynthesis; UDP-N-acetyl-alpha-D-glucosamine biosynthesis; UDP-N-acetyl-alpha-D-glucosamine from N-acetyl-alpha-D-glucosamine 1-phosphate: step 1/1. In terms of biological role, catalyzes the last two sequential reactions in the de novo biosynthetic pathway for UDP-N-acetyl-glucosamine (UDP-GlcNAc). Responsible for the acetylation of GlcN-1-P to GlcNAc-1-P, and for the uridyl transfer from UTP to GlcNAc-1-P, to produce UDP-GlcNAc and pyrophosphate. This chain is Bifunctional protein GlmU, found in Methanococcus aeolicus (strain ATCC BAA-1280 / DSM 17508 / OCM 812 / Nankai-3).